The following is a 122-amino-acid chain: NADH-ubiquinone oxidoreductase chain 3 (122 aa).

Helical transmembrane passes span 12–32 (VLIFFIFSFGLSCIILGLSYV), 66–86 (LVAILFIIFDLEVAFLFPWAV), and 91–111 (VTIFGFWTMFIFLLILTVGFI).

Belongs to the complex I subunit 3 family.

It is found in the mitochondrion membrane. The catalysed reaction is a ubiquinone + NADH + 5 H(+)(in) = a ubiquinol + NAD(+) + 4 H(+)(out). Functionally, core subunit of the mitochondrial membrane respiratory chain NADH dehydrogenase (Complex I) that is believed to belong to the minimal assembly required for catalysis. Complex I functions in the transfer of electrons from NADH to the respiratory chain. The immediate electron acceptor for the enzyme is believed to be ubiquinone. The chain is NADH-ubiquinone oxidoreductase chain 3 (NAD3) from Reclinomonas americana.